The sequence spans 119 residues: FAD-linked sulfhydryl oxidase (119 aa).

The ERV/ALR sulfhydryl oxidase domain occupies 1-97 (MLHWGPKFWR…ISWSEYKNIY (97 aa)). C44 and C47 are oxidised to a cystine.

It belongs to the asfivirus B119L family. Interacts with A151R. The cofactor is FAD.

It is found in the host cytoplasm. The protein localises to the virion. The enzyme catalyses 2 R'C(R)SH + O2 = R'C(R)S-S(R)CR' + H2O2. Functionally, FAD-dependent sulfhydryl oxidase that catalyzes the formation of disulfide bonds in viral proteins produced in the cell cytoplasm. The protein is FAD-linked sulfhydryl oxidase of Ornithodoros (relapsing fever ticks).